Here is a 333-residue protein sequence, read N- to C-terminus: Holliday junction branch migration complex subunit RuvB (333 aa).

Positions 1 to 182 are large ATPase domain (RuvB-L); sequence MDERLLSGES…FGVLSRLEYY (182 aa). Residues Leu21, Arg22, Gly63, Lys66, Thr67, Thr68, 129–131, Arg172, Tyr182, and Arg219 contribute to the ATP site; that span reads EDF. Thr67 serves as a coordination point for Mg(2+). The small ATPAse domain (RuvB-S) stretch occupies residues 183–253; the sequence is TVDQLSAIVE…ITQMALELLQ (71 aa). Residues 256–333 form a head domain (RuvB-H) region; it reads KLGLDHIDHK…EHFGMEMPKV (78 aa). Arg311 and Arg316 together coordinate DNA.

Belongs to the RuvB family. Homohexamer. Forms an RuvA(8)-RuvB(12)-Holliday junction (HJ) complex. HJ DNA is sandwiched between 2 RuvA tetramers; dsDNA enters through RuvA and exits via RuvB. An RuvB hexamer assembles on each DNA strand where it exits the tetramer. Each RuvB hexamer is contacted by two RuvA subunits (via domain III) on 2 adjacent RuvB subunits; this complex drives branch migration. In the full resolvosome a probable DNA-RuvA(4)-RuvB(12)-RuvC(2) complex forms which resolves the HJ.

The protein localises to the cytoplasm. The catalysed reaction is ATP + H2O = ADP + phosphate + H(+). Its function is as follows. The RuvA-RuvB-RuvC complex processes Holliday junction (HJ) DNA during genetic recombination and DNA repair, while the RuvA-RuvB complex plays an important role in the rescue of blocked DNA replication forks via replication fork reversal (RFR). RuvA specifically binds to HJ cruciform DNA, conferring on it an open structure. The RuvB hexamer acts as an ATP-dependent pump, pulling dsDNA into and through the RuvAB complex. RuvB forms 2 homohexamers on either side of HJ DNA bound by 1 or 2 RuvA tetramers; 4 subunits per hexamer contact DNA at a time. Coordinated motions by a converter formed by DNA-disengaged RuvB subunits stimulates ATP hydrolysis and nucleotide exchange. Immobilization of the converter enables RuvB to convert the ATP-contained energy into a lever motion, pulling 2 nucleotides of DNA out of the RuvA tetramer per ATP hydrolyzed, thus driving DNA branch migration. The RuvB motors rotate together with the DNA substrate, which together with the progressing nucleotide cycle form the mechanistic basis for DNA recombination by continuous HJ branch migration. Branch migration allows RuvC to scan DNA until it finds its consensus sequence, where it cleaves and resolves cruciform DNA. This Bacillus anthracis (strain A0248) protein is Holliday junction branch migration complex subunit RuvB.